The sequence spans 316 residues: Methionyl-tRNA formyltransferase (316 aa).

A (6S)-5,6,7,8-tetrahydrofolate-binding site is contributed by 111–114 (GLLP).

This sequence belongs to the Fmt family.

It catalyses the reaction L-methionyl-tRNA(fMet) + (6R)-10-formyltetrahydrofolate = N-formyl-L-methionyl-tRNA(fMet) + (6S)-5,6,7,8-tetrahydrofolate + H(+). Its function is as follows. Attaches a formyl group to the free amino group of methionyl-tRNA(fMet). The formyl group appears to play a dual role in the initiator identity of N-formylmethionyl-tRNA by promoting its recognition by IF2 and preventing the misappropriation of this tRNA by the elongation apparatus. The polypeptide is Methionyl-tRNA formyltransferase (Chlamydia trachomatis serovar A (strain ATCC VR-571B / DSM 19440 / HAR-13)).